A 562-amino-acid chain; its full sequence is Arginine--tRNA ligase 1 (562 aa).

The short motif at 122-132 (PNIAKPFSMGH) is the 'HIGH' region element.

This sequence belongs to the class-I aminoacyl-tRNA synthetase family. In terms of assembly, monomer.

The protein localises to the cytoplasm. The catalysed reaction is tRNA(Arg) + L-arginine + ATP = L-arginyl-tRNA(Arg) + AMP + diphosphate. The chain is Arginine--tRNA ligase 1 from Bacillus thuringiensis subsp. konkukian (strain 97-27).